The chain runs to 648 residues: Calpain-5 (648 aa).

The 326-residue stretch at 28-353 (PFVDTLFPPT…FTDISLCQLF (326 aa)) folds into the Calpain catalytic domain. Catalysis depends on residues Cys-83, His-252, and Asn-290. The tract at residues 354–509 (NTSVFSFSRS…VYSDEHIHFS (156 aa)) is domain III. A C2 domain is found at 502–625 (SDEHIHFSPL…ENRDTTLQLT (124 aa)).

This sequence belongs to the peptidase C2 family. It depends on Ca(2+) as a cofactor. Expressed in neuronal, but not in GABA-ergic neurons, intestinal, hypodermal and excretory tissues.

In terms of biological role, required for the correct female sexual development of the soma and germline in hermaphrodite animals, while being fully dispensable in males. Has calcium-dependent proteolytic activity and is involved in the cleavage of tra-2, for which it acts as a potentiator. Capable of calcium-dependent autolysis. Part of the necrosis cell death pathway. Required for necrosis of intestinal cells induced by B.thuringiensis endotoxin Cry6Aa. The protein is Calpain-5 of Caenorhabditis elegans.